A 133-amino-acid chain; its full sequence is Fatty acid-binding protein homolog 1 (133 aa).

Position 1 is an N-acetylmethionine (Met1). Residues Arg107 and Arg127–Tyr129 each bind hexadecanoate.

Belongs to the calycin superfamily. Fatty-acid binding protein (FABP) family.

Has been implicated in the acquisition, storage, and transport of lipids, and may be important to the organism since it is incapable of synthesizing most of its lipids de novo. In Echinococcus granulosus (Hydatid tapeworm), this protein is Fatty acid-binding protein homolog 1 (FABP1).